The sequence spans 190 residues: Calcium-binding protein NCS-1 (190 aa).

The N-myristoyl glycine moiety is linked to residue Gly-2. 4 consecutive EF-hand domains span residues Ser-40 to Phe-58, Asp-60 to Gly-95, Glu-96 to Met-131, and Thr-144 to Ile-179. The Ca(2+) site is built by Asp-73, Asp-75, Asn-77, Tyr-79, Glu-84, Asp-109, Asp-111, Asn-113, Glu-120, Asp-157, Asn-159, Asp-161, Gln-163, and Glu-168.

Belongs to the recoverin family.

It localises to the membrane. In terms of biological role, negatively regulates sporulation perhaps by controlling Ca(2+)-dependent desensitization of git3. This Schizosaccharomyces pombe (strain 972 / ATCC 24843) (Fission yeast) protein is Calcium-binding protein NCS-1 (ncs1).